The primary structure comprises 343 residues: Dihydroorotase (343 aa).

2 residues coordinate Zn(2+): His13 and His15. Substrate is bound by residues 15–17 (HLR) and Asn41. Zn(2+) is bound by residues Lys99, His136, and His174. Lys99 carries the N6-carboxylysine modification. Residue His136 coordinates substrate. Substrate is bound at residue Leu219. Asp247 serves as a coordination point for Zn(2+). Residue Asp247 is part of the active site. Positions 251 and 263 each coordinate substrate.

Belongs to the metallo-dependent hydrolases superfamily. DHOase family. Class II DHOase subfamily. In terms of assembly, homodimer. Zn(2+) is required as a cofactor.

The enzyme catalyses (S)-dihydroorotate + H2O = N-carbamoyl-L-aspartate + H(+). It participates in pyrimidine metabolism; UMP biosynthesis via de novo pathway; (S)-dihydroorotate from bicarbonate: step 3/3. Functionally, catalyzes the reversible cyclization of carbamoyl aspartate to dihydroorotate. The protein is Dihydroorotase of Shewanella putrefaciens (strain CN-32 / ATCC BAA-453).